Here is a 262-residue protein sequence, read N- to C-terminus: Phosphatidylglycerol--prolipoprotein diacylglyceryl transferase (262 aa).

Helical transmembrane passes span L9–V29, I41–A61, I80–V100, and L109–L129. An a 1,2-diacyl-sn-glycero-3-phospho-(1'-sn-glycerol)-binding site is contributed by R131. A run of 3 helical transmembrane segments spans residues Q167–F187, G197–M217, and L227–Y247.

This sequence belongs to the Lgt family.

It localises to the cell membrane. The catalysed reaction is L-cysteinyl-[prolipoprotein] + a 1,2-diacyl-sn-glycero-3-phospho-(1'-sn-glycerol) = an S-1,2-diacyl-sn-glyceryl-L-cysteinyl-[prolipoprotein] + sn-glycerol 1-phosphate + H(+). Its pathway is protein modification; lipoprotein biosynthesis (diacylglyceryl transfer). Its function is as follows. Catalyzes the transfer of the diacylglyceryl group from phosphatidylglycerol to the sulfhydryl group of the N-terminal cysteine of a prolipoprotein, the first step in the formation of mature lipoproteins. The sequence is that of Phosphatidylglycerol--prolipoprotein diacylglyceryl transferase from Streptococcus pneumoniae (strain JJA).